Consider the following 157-residue polypeptide: Endoribonuclease YbeY (157 aa).

His114, His118, and His124 together coordinate Zn(2+).

It belongs to the endoribonuclease YbeY family. Zn(2+) is required as a cofactor.

The protein resides in the cytoplasm. Its function is as follows. Single strand-specific metallo-endoribonuclease involved in late-stage 70S ribosome quality control and in maturation of the 3' terminus of the 16S rRNA. The polypeptide is Endoribonuclease YbeY (Serratia proteamaculans (strain 568)).